A 653-amino-acid chain; its full sequence is Mediator of RNA polymerase II transcription subunit 17 (653 aa).

The interval 246 to 271 (SNESDEHIDSTTGHDIPGTSEKLSAS) is disordered.

The protein belongs to the Mediator complex subunit 17 family. Component of the Mediator complex.

Its subcellular location is the nucleus. Its function is as follows. Component of the Mediator complex, a coactivator involved in the regulated transcription of nearly all RNA polymerase II-dependent genes. Mediator functions as a bridge to convey information from gene-specific regulatory proteins to the basal RNA polymerase II transcription machinery. The Mediator complex, having a compact conformation in its free form, is recruited to promoters by direct interactions with regulatory proteins and serves for the assembly of a functional preinitiation complex with RNA polymerase II and the general transcription factors. This Arabidopsis thaliana (Mouse-ear cress) protein is Mediator of RNA polymerase II transcription subunit 17 (MED17).